Consider the following 1158-residue polypeptide: Voltage-gated inwardly rectifying potassium channel KCNH2 (1158 aa).

Topologically, residues M1 to Y402 are cytoplasmic. One can recognise a PAS domain in the interval T17 to G88. Residues R92–D144 form the PAC domain. Positions R232 to L314 are disordered. A Phosphoserine modification is found at S239. Positions P258–R269 are enriched in polar residues. S283, S284, S319, and S350 each carry phosphoserine. The helical transmembrane segment at S403 to F423 threads the bilayer. The Extracellular portion of the chain corresponds to T424–Q449. A helical transmembrane segment spans residues P450 to F470. At R471–K494 the chain is on the cytoplasmic side. A helical membrane pass occupies residues G495–G515. Over S516–L519 the chain is Extracellular. The helical; Voltage-sensor transmembrane segment at I520–R540 threads the bilayer. Over Y541–A546 the chain is Cytoplasmic. The chain crosses the membrane as a helical span at residues A547 to W567. The Extracellular portion of the chain corresponds to Y568–Y610. N597 carries an N-linked (GlcNAc...) asparagine glycan. Residues V611–P631 constitute an intramembrane region (pore-forming). Positions S623 to N628 match the Selectivity filter motif. At N632 to K637 the chain is on the extracellular side. A helical transmembrane segment spans residues I638 to V658. Residues S659–S1158 are Cytoplasmic-facing. The cNMP-binding domain stretch occupies residues P741–L841. The disordered stretch occupies residues G869–S987. Phosphoserine occurs at positions 870 and 873. The segment covering R882–R891 has biased composition (basic residues). Residues G910–W926 are compositionally biased toward gly residues. Positions G927 to E938 are enriched in low complexity. The segment covering S959–G969 has biased composition (pro residues). Position 1013 is an omega-N-methylarginine (R1013). The stretch at R1034–T1061 forms a coiled coil. The interval F1116–S1158 is disordered. S1136 is modified (phosphoserine).

It belongs to the potassium channel family. H (Eag) (TC 1.A.1.20) subfamily. Kv11.1/KCNH2 sub-subfamily. The potassium channel is probably composed of a homo- or heterotetrameric complex of pore-forming alpha subunits that can associate with modulating beta subunits. Interacts with DNAJB12 and DNAJB14; chaperones DNAJB12 and DNAJB14 promote tetramerization. Heteromultimer with KCNH6/ERG2 and KCNH7/ERG3. Interacts with ALG10B. Forms a stable complex with KCNE1 or KCNE2, and that this heteromultimerization regulates Inward rectifier potassium channel activity. Interacts with CANX. The core-glycosylated, but not the fully glycosylated form interacts with RNF207. Interacts with NDFIP1 and NDFIP2; this interaction decreases the cell membrane expression by targeting KCNH2, through interaction with NEDD4L, for the degradation through the multivesicular bodies (MVBs)-lysosomal pathway. Post-translationally, phosphorylated on serine and threonine residues. Phosphorylation by PKA inhibits ion conduction. As to expression, highly expressed in left and right atria of the heart, in cortex and hippocampus; detected at intermediate levels in left and right ventricle, Purkinje fibers, cerebellum, thalamus and basal ganglia; detected at low levels in liver, spleen and kidney.

The protein resides in the cell membrane. It catalyses the reaction K(+)(in) = K(+)(out). Its function is as follows. Pore-forming (alpha) subunit of voltage-gated inwardly rectifying potassium channel. Characterized by unusual gating kinetics by producing relatively small outward currents during membrane depolarization and large inward currents during subsequent repolarization which reflect a rapid inactivation during depolarization and quick recovery from inactivation but slow deactivation (closing) during repolarization. Channel properties are modulated by cAMP and subunit assembly. Forms a stable complex with KCNE1 or KCNE2, and that this heteromultimerization regulates inward rectifier potassium channel activity. This Canis lupus familiaris (Dog) protein is Voltage-gated inwardly rectifying potassium channel KCNH2.